The following is a 380-amino-acid chain: Anthranilate phosphoribosyltransferase (380 aa).

5-phospho-alpha-D-ribose 1-diphosphate contacts are provided by glycine 109, asparagine 119, serine 121, threonine 122, lysine 142, serine 144, and serine 146. The Mg(2+) site is built by aspartate 258 and glutamate 259.

This sequence belongs to the anthranilate phosphoribosyltransferase family. Homodimer. It depends on Mg(2+) as a cofactor.

The enzyme catalyses N-(5-phospho-beta-D-ribosyl)anthranilate + diphosphate = 5-phospho-alpha-D-ribose 1-diphosphate + anthranilate. It participates in amino-acid biosynthesis; L-tryptophan biosynthesis; L-tryptophan from chorismate: step 2/5. Catalyzes the transfer of the phosphoribosyl group of 5-phosphorylribose-1-pyrophosphate (PRPP) to anthranilate to yield N-(5'-phosphoribosyl)-anthranilate (PRA), the second step in tryptophan biosynthesis. This is Anthranilate phosphoribosyltransferase from Saccharomyces cerevisiae (strain ATCC 204508 / S288c) (Baker's yeast).